The chain runs to 233 residues: Probable RNA 2'-phosphotransferase (233 aa).

The protein belongs to the KptA/TPT1 family.

Removes the 2'-phosphate from RNA via an intermediate in which the phosphate is ADP-ribosylated by NAD followed by a presumed transesterification to release the RNA and generate ADP-ribose 1''-2''-cyclic phosphate (APPR&gt;P). May function as an ADP-ribosylase. This chain is Probable RNA 2'-phosphotransferase, found in Hyperthermus butylicus (strain DSM 5456 / JCM 9403 / PLM1-5).